The primary structure comprises 560 residues: Protein GAT2 (560 aa).

Disordered stretches follow at residues 274 to 297, 345 to 383, and 412 to 461; these read RQQEQQQLKQQESEKESSSPFSNK, FLSTSSSSPSPTAGSAPLQKLQVPRQDDPNDKKMNISSS, and LNTK…SDEK. Residues 347-361 are compositionally biased toward low complexity; the sequence is STSSSSPSPTAGSAP. The segment covering 369–378 has biased composition (basic and acidic residues); the sequence is RQDDPNDKKM. A compositionally biased stretch (basic residues) spans 414 to 425; it reads TKKKNNRGRPRA. Residues 428-456 show a composition bias toward polar residues; sequence RQPTLTTSSHFINNSNPGAAAVSTTTPAA. Residues 472–497 form a GATA-type zinc finger; sequence CFHCGETETPEWRKGPYGTRTLCNAC.

The protein is Protein GAT2 (GAT2) of Saccharomyces cerevisiae (strain ATCC 204508 / S288c) (Baker's yeast).